Reading from the N-terminus, the 932-residue chain is Probable serine/threonine-protein kinase clkA (932 aa).

Residues 1–10 (MDRFQTKRKT) are compositionally biased toward basic residues. Disordered regions lie at residues 1–21 (MDRFQTKRKTYSYNGYSNNDY), 39–198 (YKNN…YGDT), and 212–562 (NDYD…TNTN). Composition is skewed to low complexity over residues 11-21 (YSYNGYSNNDY) and 39-123 (YKNN…ENNY). A compositionally biased stretch (polar residues) spans 124–143 (FQSENQSNKDQNSYFNSSYL). Composition is skewed to low complexity over residues 148–196 (DNYN…NSYG), 218–305 (NNNN…NGGN), 314–342 (VFNNNNNNNNNNNNNYNNYNSNNNYNNDY), and 351–562 (NIYS…TNTN). Positions 590 to 920 (YKVLCTVGSG…ASDALSHPFL (331 aa)) constitute a Protein kinase domain. Residues 596-604 (VGSGTFSTV) and Lys619 contribute to the ATP site. Asp719 serves as the catalytic Proton acceptor.

It belongs to the protein kinase superfamily. CMGC Ser/Thr protein kinase family.

It carries out the reaction L-seryl-[protein] + ATP = O-phospho-L-seryl-[protein] + ADP + H(+). The catalysed reaction is L-threonyl-[protein] + ATP = O-phospho-L-threonyl-[protein] + ADP + H(+). The sequence is that of Probable serine/threonine-protein kinase clkA (clkA) from Dictyostelium discoideum (Social amoeba).